Consider the following 87-residue polypeptide: Small ribosomal subunit protein bS16 (87 aa).

It belongs to the bacterial ribosomal protein bS16 family.

The chain is Small ribosomal subunit protein bS16 from Onion yellows phytoplasma (strain OY-M).